The chain runs to 387 residues: S-adenosylmethionine synthase (387 aa).

Residue H16 coordinates ATP. D18 contacts Mg(2+). A K(+)-binding site is contributed by E44. 2 residues coordinate L-methionine: E57 and Q100. Residues 100–110 (QSPDIAQGVDR) form a flexible loop region. ATP contacts are provided by residues 167–169 (DAK), 232–233 (RF), D241, 247–248 (RK), A264, and K268. Residue D241 coordinates L-methionine. Position 272 (K272) interacts with L-methionine.

The protein belongs to the AdoMet synthase family. As to quaternary structure, homotetramer; dimer of dimers. Mg(2+) serves as cofactor. Requires K(+) as cofactor.

The protein resides in the cytoplasm. It catalyses the reaction L-methionine + ATP + H2O = S-adenosyl-L-methionine + phosphate + diphosphate. It participates in amino-acid biosynthesis; S-adenosyl-L-methionine biosynthesis; S-adenosyl-L-methionine from L-methionine: step 1/1. Its function is as follows. Catalyzes the formation of S-adenosylmethionine (AdoMet) from methionine and ATP. The overall synthetic reaction is composed of two sequential steps, AdoMet formation and the subsequent tripolyphosphate hydrolysis which occurs prior to release of AdoMet from the enzyme. The protein is S-adenosylmethionine synthase of Cupriavidus necator (strain ATCC 17699 / DSM 428 / KCTC 22496 / NCIMB 10442 / H16 / Stanier 337) (Ralstonia eutropha).